A 431-amino-acid chain; its full sequence is Histidinol dehydrogenase (431 aa).

Tyr127, Gln189, and Asn212 together coordinate NAD(+). Substrate contacts are provided by Ser237, Gln259, and His262. Residues Gln259 and His262 each coordinate Zn(2+). Residues Glu326 and His327 each act as proton acceptor in the active site. Substrate is bound by residues His327, Asp360, Glu414, and His419. Asp360 is a Zn(2+) binding site. A Zn(2+)-binding site is contributed by His419.

It belongs to the histidinol dehydrogenase family. Requires Zn(2+) as cofactor.

The enzyme catalyses L-histidinol + 2 NAD(+) + H2O = L-histidine + 2 NADH + 3 H(+). It participates in amino-acid biosynthesis; L-histidine biosynthesis; L-histidine from 5-phospho-alpha-D-ribose 1-diphosphate: step 9/9. Catalyzes the sequential NAD-dependent oxidations of L-histidinol to L-histidinaldehyde and then to L-histidine. This is Histidinol dehydrogenase from Xanthomonas campestris pv. campestris (strain ATCC 33913 / DSM 3586 / NCPPB 528 / LMG 568 / P 25).